The primary structure comprises 156 residues: Small ribosomal subunit protein uS7 (156 aa).

It belongs to the universal ribosomal protein uS7 family. Part of the 30S ribosomal subunit. Contacts proteins S9 and S11.

Its function is as follows. One of the primary rRNA binding proteins, it binds directly to 16S rRNA where it nucleates assembly of the head domain of the 30S subunit. Is located at the subunit interface close to the decoding center, probably blocks exit of the E-site tRNA. This Polynucleobacter asymbioticus (strain DSM 18221 / CIP 109841 / QLW-P1DMWA-1) (Polynucleobacter necessarius subsp. asymbioticus) protein is Small ribosomal subunit protein uS7.